Here is an 82-residue protein sequence, read N- to C-terminus: Conotoxin Cal30 (82 aa).

The signal sequence occupies residues 1 to 19 (MEKLIILLLVASLLVTTDS).

Post-translationally, may contain 5 disulfide bonds. As to expression, expressed by the venom duct.

Its subcellular location is the secreted. Its function is as follows. Probable neurotoxin. This is Conotoxin Cal30 from Californiconus californicus (California cone).